The chain runs to 488 residues: Glutamyl-tRNA(Gln) amidotransferase subunit A (488 aa).

Active-site charge relay system residues include Lys77 and Ser152. Ser176 (acyl-ester intermediate) is an active-site residue.

This sequence belongs to the amidase family. GatA subfamily. As to quaternary structure, heterotrimer of A, B and C subunits.

It catalyses the reaction L-glutamyl-tRNA(Gln) + L-glutamine + ATP + H2O = L-glutaminyl-tRNA(Gln) + L-glutamate + ADP + phosphate + H(+). Its function is as follows. Allows the formation of correctly charged Gln-tRNA(Gln) through the transamidation of misacylated Glu-tRNA(Gln) in organisms which lack glutaminyl-tRNA synthetase. The reaction takes place in the presence of glutamine and ATP through an activated gamma-phospho-Glu-tRNA(Gln). The chain is Glutamyl-tRNA(Gln) amidotransferase subunit A from Streptococcus pyogenes serotype M18 (strain MGAS8232).